Here is an 855-residue protein sequence, read N- to C-terminus: Envelope glycoprotein gp150 (855 aa).

Residues 1–784 (MAEGFAANRQ…WIGNIPQYLK (784 aa)) lie on the Extracellular side of the membrane. N-linked (GlcNAc...) asparagine; by host glycosylation is found at Asn220, Asn258, Asn269, Asn274, Asn298, Asn336, Asn418, Asn422, Asn448, Asn469, Asn481, Asn499, Asn518, Asn531, Asn548, and Asn551. A fusion peptide region spans residues 615–635 (VMLALATVLSMAGAGTGATAI). Residues 642–692 (HQVLATHQETIEKVTEALKINNLRLVTLEHQVLVIGLKVEAMEKFLYTAFA) adopt a coiled-coil conformation. The segment at 661-679 (INNLRLVTLEHQVLVIGLK) is immunosuppression. Asn716, Asn720, Asn728, and Asn736 each carry an N-linked (GlcNAc...) asparagine; by host glycan. The stretch at 735-771 (YNQTKELQQKFYEIIMNIEQNNVQVKKGLQQLQEWED) forms a coiled coil. A helical membrane pass occupies residues 785–805 (GLLGGILGIGIGVLLLILCLP). Residues 806–855 (TLVDCIRNCISKVLGYTVIAMPEIGDEEETVQMELRKNGRQCGMSEKEEE) lie on the Cytoplasmic side of the membrane.

As to quaternary structure, the mature envelope protein (Env) consists of a trimer of SU-TM heterodimers attached by noncovalent interactions or by a labile interchain disulfide bond. In terms of processing, specific enzymatic cleavages in vivo yield mature proteins. Envelope glycoproteins are synthesized as an inactive precursor that is N-glycosylated and processed likely by host cell furin or by a furin-like protease in the Golgi to yield the mature SU and TM proteins. The cleavage site between SU and TM requires the minimal sequence [KR]-X-[KR]-R.

It localises to the virion membrane. It is found in the host cell membrane. Its function is as follows. The surface protein (SU) attaches the virus to the host cell by binding to its receptor. This interaction triggers the refolding of the transmembrane protein (TM) and is thought to activate its fusogenic potential by unmasking its fusion peptide. Fusion occurs at the host cell plasma membrane. Functionally, the transmembrane protein (TM) acts as a class I viral fusion protein. Under the current model, the protein has at least 3 conformational states: pre-fusion native state, pre-hairpin intermediate state, and post-fusion hairpin state. During viral and target cell membrane fusion, the coiled coil regions (heptad repeats) assume a trimer-of-hairpins structure, positioning the fusion peptide in close proximity to the C-terminal region of the ectodomain. The formation of this structure appears to drive apposition and subsequent fusion of viral and target cell membranes. Membranes fusion leads to delivery of the nucleocapsid into the cytoplasm. The chain is Envelope glycoprotein gp150 (env) from Felidae (cat family).